Reading from the N-terminus, the 258-residue chain is Ferredoxin--NADP reductase (258 aa).

In terms of domain architecture, FAD-binding FR-type spans 2–102; that stretch reads SNLNVERVLS…RKPTGTLVTS (101 aa). Asp-17 contributes to the NADP(+) binding site. FAD-binding positions include 51 to 54, 67 to 69, 74 to 77, and Thr-117; these read RAYS, FSI, and GPLT. NADP(+) contacts are provided by residues 144-145, 181-182, and Arg-190; these read VR and TR. 254 to 258 is an FAD binding site; that stretch reads AFVEK.

This sequence belongs to the ferredoxin--NADP reductase type 1 family. Monomer. It depends on FAD as a cofactor.

The catalysed reaction is 2 reduced [2Fe-2S]-[ferredoxin] + NADP(+) + H(+) = 2 oxidized [2Fe-2S]-[ferredoxin] + NADPH. Functionally, transports electrons between ferredoxin and NADPH. This Azotobacter vinelandii protein is Ferredoxin--NADP reductase.